A 129-amino-acid polypeptide reads, in one-letter code: Small ribosomal subunit protein uS12 (129 aa).

The disordered stretch occupies residues 110 to 129 (RKQGRSRYGAHRKQVAATKK).

The protein belongs to the universal ribosomal protein uS12 family. Part of the 30S ribosomal subunit. Contacts proteins S8 and S17. May interact with IF1 in the 30S initiation complex.

With S4 and S5 plays an important role in translational accuracy. Functionally, interacts with and stabilizes bases of the 16S rRNA that are involved in tRNA selection in the A site and with the mRNA backbone. Located at the interface of the 30S and 50S subunits, it traverses the body of the 30S subunit contacting proteins on the other side and probably holding the rRNA structure together. The combined cluster of proteins S8, S12 and S17 appears to hold together the shoulder and platform of the 30S subunit. This chain is Small ribosomal subunit protein uS12, found in Rickettsia prowazekii (strain Madrid E).